The sequence spans 70 residues: Acyl carrier protein (70 aa).

The Carrier domain occupies 2–70 (SDIADRVKKI…ETIQTFGDAP (69 aa)). Ser37 carries the O-(pantetheine 4'-phosphoryl)serine modification.

Belongs to the acyl carrier protein (ACP) family. In terms of processing, 4'-phosphopantetheine is transferred from CoA to a specific serine of apo-ACP by AcpS. This modification is essential for activity because fatty acids are bound in thioester linkage to the sulfhydryl of the prosthetic group.

The protein resides in the cytoplasm. The protein operates within lipid metabolism; fatty acid biosynthesis. Carrier of the growing fatty acid chain in fatty acid biosynthesis. In Cereibacter sphaeroides (Rhodobacter sphaeroides), this protein is Acyl carrier protein.